A 239-amino-acid polypeptide reads, in one-letter code: Serine protease SplF (239 aa).

Positions 1-36 (MNKNIIIKSIAALTILTSITGVGTTVVDGIQQTAKA) are cleaved as a signal peptide. Catalysis depends on charge relay system residues His75, Asp114, and Ser192.

The protein belongs to the peptidase S1B family.

It is found in the secreted. The polypeptide is Serine protease SplF (splF) (Staphylococcus aureus (strain MSSA476)).